Consider the following 488-residue polypeptide: Stress activated transcription factor atfs-1 (488 aa).

The transit peptide at 1 to 23 (MFSRVGRLTTFGAQAVSNCPFRR) directs the protein to the mitochondrion. The segment at 138–191 (SWQNGSSVGHPHGHQQQQQTCQQPPTHSSTTETMHDFSNFGDNMGSPLFQSPSK) is disordered. Residues 142 to 168 (GSSVGHPHGHQQQQQTCQQPPTHSSTT) show a composition bias toward low complexity. K342 is covalently cross-linked (Glycyl lysine isopeptide (Lys-Gly) (interchain with G-Cter in smo-1)). The tract at residues 353-400 (QRDDDDEDYIPASEARRTSSRLNRKSATPTYLRRRDSERSWTPASDDY) is disordered. A bZIP domain is found at 420–483 (DEETDRRRML…NSMKKELRKM (64 aa)). The interval 425–460 (RRRMLNRIAAVRYREKKRAEKKGRKMEFQEVADRNR) is basic motif. Positions 436-441 (RYREKK) match the Nuclear localization signal motif. Positions 462–469 (LLQKERQL) are leucine-zipper.

Belongs to the bZIP family. Post-translationally, may be desumoylated by ulp-4. Ubiquitously expressed.

Its subcellular location is the mitochondrion matrix. The protein localises to the cytoplasm. It localises to the nucleus. In terms of biological role, acts as a transcription factor during mitochondrial stress by activating the mitochondrial unfolded protein response (mtUPR). Induces nuclear and mitochondrial gene transcription, including genes coding for mitochondrial chaperones and proteins involved in glycolysis, amino acid catabolism and innate immunity. Following mitochondrial stress, restores mitochondrial respiratory capacity by limiting the transcription of oxidative phosphorylation (OXPHOS) machinery genes and by promoting the assembly of OXPHOS complexes via the up-regulation of chaperone and assembly factor genes. Component of a feedback loop involving atfs-1, atgl-1 and hlh-11. Acts together with flp-7 to negatively regulate the expression of the transcription regulator hlh-11, to promote expression of atgl-1, and thus atgl-1-dependent fat oxidation in response to mitochondrial stress. In addition, functions with hlh-11 to maintain lifespan. Promotes mtDNA maintenance and propagation of deleterious mtDNA. The protein is Stress activated transcription factor atfs-1 of Caenorhabditis elegans.